The primary structure comprises 302 residues: Sulfate adenylyltransferase subunit 2 (302 aa).

A disordered region spans residues 280–302; that stretch reads RQGRAIDHDQSGSMELKKRQGYF.

Belongs to the PAPS reductase family. CysD subfamily. Heterodimer composed of CysD, the smaller subunit, and CysN.

The enzyme catalyses sulfate + ATP + H(+) = adenosine 5'-phosphosulfate + diphosphate. It functions in the pathway sulfur metabolism; hydrogen sulfide biosynthesis; sulfite from sulfate: step 1/3. Functionally, with CysN forms the ATP sulfurylase (ATPS) that catalyzes the adenylation of sulfate producing adenosine 5'-phosphosulfate (APS) and diphosphate, the first enzymatic step in sulfur assimilation pathway. APS synthesis involves the formation of a high-energy phosphoric-sulfuric acid anhydride bond driven by GTP hydrolysis by CysN coupled to ATP hydrolysis by CysD. The chain is Sulfate adenylyltransferase subunit 2 from Vibrio atlanticus (strain LGP32) (Vibrio splendidus (strain Mel32)).